The following is a 437-amino-acid chain: Ribosomal protein uS12 methylthiotransferase RimO (437 aa).

The MTTase N-terminal domain maps to 3 to 118 (KKFYITTLGC…AGKILREKFP (116 aa)). The [4Fe-4S] cluster site is built by Cys-12, Cys-48, Cys-81, Cys-157, Cys-161, and Cys-164. The 228-residue stretch at 143 to 370 (NYSKPYAYVK…RDSHLEILEE (228 aa)) folds into the Radical SAM core domain. The TRAM domain maps to 373–437 (ESRIGRTYDA…YEYDMNGTWV (65 aa)).

This sequence belongs to the methylthiotransferase family. RimO subfamily. Requires [4Fe-4S] cluster as cofactor.

It localises to the cytoplasm. It carries out the reaction L-aspartate(89)-[ribosomal protein uS12]-hydrogen + (sulfur carrier)-SH + AH2 + 2 S-adenosyl-L-methionine = 3-methylsulfanyl-L-aspartate(89)-[ribosomal protein uS12]-hydrogen + (sulfur carrier)-H + 5'-deoxyadenosine + L-methionine + A + S-adenosyl-L-homocysteine + 2 H(+). Functionally, catalyzes the methylthiolation of an aspartic acid residue of ribosomal protein uS12. This chain is Ribosomal protein uS12 methylthiotransferase RimO, found in Leptospira interrogans serogroup Icterohaemorrhagiae serovar copenhageni (strain Fiocruz L1-130).